Consider the following 149-residue polypeptide: METQRASLCLGRWSLWLLLLALVVPSASAQALSYREAVLRAVDRLNEQSSEANLYRLLELDQPPKADEDPGTPKPVSFTVKETVCPRPTRQPPELCDFKENGRVKQCVGTVTLDQIKDPLDITCNEVQGVRGGRLCYCRRRFCVCVGRG.

The first 29 residues, 1-29 (METQRASLCLGRWSLWLLLLALVVPSASA), serve as a signal peptide directing secretion. Positions 30 to 130 (QALSYREAVL…DITCNEVQGV (101 aa)) are excised as a propeptide. Positions 61–80 (DQPPKADEDPGTPKPVSFTV) are disordered. 4 cysteine pairs are disulfide-bonded: Cys-85–Cys-96, Cys-107–Cys-124, Cys-136–Cys-145, and Cys-138–Cys-143. Arg-148 carries the post-translational modification Arginine amide.

This sequence belongs to the cathelicidin family.

The protein localises to the secreted. Functionally, microbicidal activity. Active against E.coli, Listeria monocytogenes and C.albicans, in vitro. This chain is Protegrin-1 (NPG1), found in Sus scrofa (Pig).